Here is a 311-residue protein sequence, read N- to C-terminus: Geranylgeranyl transferase type-2 subunit beta (311 aa).

PFTB repeat units lie at residues 54 to 95 (KERI…AMLD), 102 to 143 (KDKV…AILG), 150 to 191 (KNTA…KILN), 197 to 239 (DEEL…AIIG), and 246 to 288 (RNQL…SLLQ). Residues 176–178 (HGA) and 218–230 (RPEKLPDSCYGWW) contribute to the geranylgeranyl diphosphate site. Zn(2+)-binding residues include D224, C226, and H276.

It belongs to the protein prenyltransferase subunit beta family. Heterodimer of an alpha and a beta subunit. Zn(2+) serves as cofactor.

It catalyses the reaction geranylgeranyl diphosphate + L-cysteinyl-[protein] = S-geranylgeranyl-L-cysteinyl-[protein] + diphosphate. Its function is as follows. Catalyzes the transfer of a geranyl-geranyl moiety from geranyl-geranyl pyrophosphate to proteins having the C-terminal -XCC or -XCXC, where both cysteines may become modified. The protein is Geranylgeranyl transferase type-2 subunit beta (ptb1) of Schizosaccharomyces pombe (strain 972 / ATCC 24843) (Fission yeast).